Here is a 96-residue protein sequence, read N- to C-terminus: Co-chaperonin GroES (96 aa).

It belongs to the GroES chaperonin family. In terms of assembly, heptamer of 7 subunits arranged in a ring. Interacts with the chaperonin GroEL.

Its subcellular location is the cytoplasm. Together with the chaperonin GroEL, plays an essential role in assisting protein folding. The GroEL-GroES system forms a nano-cage that allows encapsulation of the non-native substrate proteins and provides a physical environment optimized to promote and accelerate protein folding. GroES binds to the apical surface of the GroEL ring, thereby capping the opening of the GroEL channel. The polypeptide is Co-chaperonin GroES (Paracidovorax citrulli (strain AAC00-1) (Acidovorax citrulli)).